The sequence spans 104 residues: ATP-dependent Clp protease adapter protein ClpS (104 aa).

This sequence belongs to the ClpS family. As to quaternary structure, binds to the N-terminal domain of the chaperone ClpA.

In terms of biological role, involved in the modulation of the specificity of the ClpAP-mediated ATP-dependent protein degradation. The protein is ATP-dependent Clp protease adapter protein ClpS of Bordetella bronchiseptica (strain ATCC BAA-588 / NCTC 13252 / RB50) (Alcaligenes bronchisepticus).